A 373-amino-acid chain; its full sequence is MVKYDAVILGSGVLGLSIANELTLKGLKVAVVGNDLPEDLDSTGFASPWAGANWHSFAINEAERRRDQYTFEQFARLAKEIPHLCERRAYYYLWKGEGAWKEPWYKDVVFGYRMLKPEEVHAPFKYGVTYEAYTLNTPLYLLHLASTLRSARVPILRARLSSLDEAYSLPQLGSVDLVINATGLGARSLLGVEDPTVYPAKGQTVLVRAPVKECYGLVDPLAQPGQKAYIIPRPGPDGYVILGGCYFPNDWSTNVNPEVAEEILKQCHTLCPRLDGKGGKGTWKDIEVISHNVGLRPVREAGLRCEVEERVIGEKVNAGLATKGGKVGGGRKVGVVHAYGIGPAGYQASLGIAKEVGELVDGWMKKSNKKAKL.

The signal sequence occupies residues 1–19 (MVKYDAVILGSGVLGLSIA). FAD-binding residues include Ser-11, Leu-14, Asp-35, Ala-46, Ser-47, Gly-51, and Asn-53. Position 57 (Phe-57) interacts with anthranilate. Asn-180 is a glycosylation site (N-linked (GlcNAc...) asparagine). Cys-214 and Cys-271 are disulfide-bonded. Tyr-229, Tyr-246, and Arg-296 together coordinate anthranilate. Residues Tyr-229, Tyr-246, and Arg-296 each contribute to the (R)-lactate site. FAD contacts are provided by Arg-296, Gly-342, Gly-345, Tyr-346, and Gln-347. Residues 371–373 (AKL) carry the Microbody targeting signal motif.

Belongs to the DAMOX/DASOX family. FAD is required as a cofactor.

The protein resides in the peroxisome matrix. It carries out the reaction a D-alpha-amino acid + O2 + H2O = a 2-oxocarboxylate + H2O2 + NH4(+). Its function is as follows. Catalyzes the oxidative deamination of D-amino acids with broad substrate specificity. Enables the organism to utilize D-amino acids as a source of nutrients. Enables the organism to utilize D-glutamate and D-methionine as a nitrogen source. Protects the organism from the toxicity of D-amino acids, including from D-glutamate. May play a role in its interaction with the host. In Cryptococcus neoformans var. grubii serotype A (strain H99 / ATCC 208821 / CBS 10515 / FGSC 9487) (Filobasidiella neoformans var. grubii), this protein is D-amino-acid oxidase 3.